Reading from the N-terminus, the 553-residue chain is Transcription factor 7-like 1 (553 aa).

Gly residues predominate over residues 1-11 (MPQLNSGGGDE). An interaction with CTNNB1 region spans residues 1 to 61 (MPQLNSGGGD…SENHSSDSDS (61 aa)). 3 disordered regions span residues 1–77 (MPQL…EKPR), 183–213 (GTPP…PYYP), and 392–474 (SARD…LTTK). Basic and acidic residues-rich tracts occupy residues 17–32 (ELIR…EKSP) and 52–77 (SENH…EKPR). Residues 109–312 (LGGHYLPNGA…SPNLITKPSV (204 aa)) form an interaction with AES and TLE4 region. The segment at residues 324-392 (IKKPLNAFML…LHSQLYPTWS (69 aa)) is a DNA-binding region (HMG box). A compositionally biased stretch (basic and acidic residues) spans 407 to 416 (KQSPEMEITK). Residues 408 to 553 (QSPEMEITKT…PLSLVTKSSD (146 aa)) form an interaction with CTBP region. The span at 444-463 (SPATPSAALASPAAPAATHS) shows a compositional bias: low complexity. The span at 464–473 (EQAQPLSLTT) shows a compositional bias: polar residues.

Belongs to the TCF/LEF family. As to quaternary structure, interacts with csnk1e, ctnnb1, ctbp, dact1 and gsk3b. May interact with ase and tle4. Post-translationally, phosphorylated. Phosphorylation by csnk1e promotes binding to ctnnb1 while phosphorylation by gsk3b may reverse this effect.

Its subcellular location is the nucleus. In terms of biological role, participates in the Wnt signaling pathway. Binds to DNA and acts as a repressor in the absence of ctnnb1, and as an activator in its presence. Required early in development for the establishment of the dorsal body axis in response to maternal Wnt signaling. In Xenopus tropicalis (Western clawed frog), this protein is Transcription factor 7-like 1 (tcf7l1).